The following is a 459-amino-acid chain: MDIDHGRESDGEMVGTIASCGLLLHSLLAGLGRRAAGFARKVGGAAREDPRRVAHSLKVGLALALVSVVYFVTPLFNGLGVSAIWAVLTVVVVMEYTVGATLSKGLNRALATLVAGCIAVGAHQLAELAERCGDQGEPIVLTVLVFFVASAATFLRFIPEIKAKYDYGVTIFILTFGLVAVSSYRVEELIQLAHQRFYTIAVGVFICLCTTVFLFPVWAGEDVHKLASGNLDKLAQFIEGMEFNCFGENSVANNFGGKDSPQMHKSVLNSKATEDSLCTFAKWEPRHGQFRFRHPWSQYQKLGTLCRQCASSMEALASYVITTSKTQCPAAANPELSCKVRKTCGEMSLHSSKVLRDLAMATRTMTVPSPVNITMATAVKAAESLRSELAENTALLQVMHVAVTATLLADLVDRVKEIAECVDVLARLAHFKNPEDTKNVVVSTVSRGIDEPLPDVVIL.

Residues 1–52 (MDIDHGRESDGEMVGTIASCGLLLHSLLAGLGRRAAGFARKVGGAAREDPRR) lie on the Extracellular side of the membrane. 2 consecutive transmembrane segments (helical) span residues 53–73 (VAHS…YFVT) and 74–94 (PLFN…VVVM). Residues 95-108 (EYTVGATLSKGLNR) lie on the Extracellular side of the membrane. The chain crosses the membrane as a helical span at residues 109 to 129 (ALATLVAGCIAVGAHQLAELA). Topologically, residues 130–137 (ERCGDQGE) are cytoplasmic. The chain crosses the membrane as a helical span at residues 138–158 (PIVLTVLVFFVASAATFLRFI). Residues 159-160 (PE) are Extracellular-facing. The helical transmembrane segment at 161 to 181 (IKAKYDYGVTIFILTFGLVAV) threads the bilayer. At 182–199 (SSYRVEELIQLAHQRFYT) the chain is on the cytoplasmic side. Residues 200-220 (IAVGVFICLCTTVFLFPVWAG) form a helical membrane-spanning segment. At 221-459 (EDVHKLASGN…DEPLPDVVIL (239 aa)) the chain is on the extracellular side.

This sequence belongs to the aromatic acid exporter (TC 2.A.85) family. Detected in root tips.

It localises to the cell membrane. With respect to regulation, activated by external aluminum. The enhancement of malate transport is not due to alteration in the selectivity properties but is due to an increased anion permeability. Functionally, malate transporter critical for aluminum tolerance. Permeable to chloride, nitrate, sulfate and malate. The polypeptide is Aluminum-activated malate transporter 1 (ALMT1) (Triticum aestivum (Wheat)).